The sequence spans 938 residues: AP-2 complex subunit alpha-2 (938 aa).

A 1,2-diacyl-sn-glycero-3-phospho-(1D-myo-inositol-3,4,5-trisphosphate)-binding positions include 11 to 12 (RG), Lys43, Tyr53, and 57 to 61 (KYVCK). Residues 616–677 (LKKKKGPSTV…APPVPAGPPP (62 aa)) form a disordered region. Positions 645–668 (PALASTSAVSTPSPSADLLGLGAA) are enriched in low complexity.

This sequence belongs to the adaptor complexes large subunit family. In terms of assembly, adaptor protein complex 2 (AP-2) is a heterotetramer composed of two large adaptins (alpha-type subunit AP2A1 or AP2A2 and beta-type subunit AP2B1), a medium adaptin (mu-type subunit AP2M1) and a small adaptin (sigma-type subunit AP2S1). Binds clathrin. Binds EPN1, EPS15, AMPH, SNAP91 and BIN1. Interacts with HIP1. Interacts with DGKD. Interacts with DENND1A, DENND1B and DENND1C. Interacts with FCHO1. Interacts with ATAT1; this interaction is required for efficient alpha-tubulin acetylation by ATAT1. Interacts with KIAA1107. Together with AP2B1 and AP2M1, it interacts with ADAM10; this interaction facilitates ADAM10 endocytosis from the plasma membrane during long-term potentiation in hippocampal neurons. Interacts with CLN3 (via dileucine motif). Interacts with ABCB11; this interaction regulates cell membrane expression of ABCB11 through its internalization in a clathrin-dependent manner and its subsequent degradation. Interacts with DNAJC6.

It is found in the cell membrane. It localises to the membrane. Its subcellular location is the coated pit. Its function is as follows. Component of the adaptor protein complex 2 (AP-2). Adaptor protein complexes function in protein transport via transport vesicles in different membrane traffic pathways. Adaptor protein complexes are vesicle coat components and appear to be involved in cargo selection and vesicle formation. AP-2 is involved in clathrin-dependent endocytosis in which cargo proteins are incorporated into vesicles surrounded by clathrin (clathrin-coated vesicles, CCVs) which are destined for fusion with the early endosome. The clathrin lattice serves as a mechanical scaffold but is itself unable to bind directly to membrane components. Clathrin-associated adaptor protein (AP) complexes which can bind directly to both the clathrin lattice and to the lipid and protein components of membranes are considered to be the major clathrin adaptors contributing the CCV formation. AP-2 also serves as a cargo receptor to selectively sort the membrane proteins involved in receptor-mediated endocytosis. AP-2 seems to play a role in the recycling of synaptic vesicle membranes from the presynaptic surface. AP-2 recognizes Y-X-X-[FILMV] (Y-X-X-Phi) and [ED]-X-X-X-L-[LI] endocytosis signal motifs within the cytosolic tails of transmembrane cargo molecules. AP-2 may also play a role in maintaining normal post-endocytic trafficking through the ARF6-regulated, non-clathrin pathway. During long-term potentiation in hippocampal neurons, AP-2 is responsible for the endocytosis of ADAM10. The AP-2 alpha subunit binds polyphosphoinositide-containing lipids, positioning AP-2 on the membrane. The AP-2 alpha subunit acts via its C-terminal appendage domain as a scaffolding platform for endocytic accessory proteins. The AP-2 alpha and AP-2 sigma subunits are thought to contribute to the recognition of the [ED]-X-X-X-L-[LI] motif. The chain is AP-2 complex subunit alpha-2 from Bos taurus (Bovine).